The chain runs to 275 residues: Undecaprenyl-diphosphatase (275 aa).

8 helical membrane passes run 4-24 (IYGL…EFLP), 54-74 (LGSI…LFGL), 92-112 (LHLY…LMFY), 123-143 (YVMY…LIHD), 154-174 (ISYL…LPGF), 194-214 (AFEF…ILDL), 228-248 (MFII…KLFW), and 255-275 (SFIP…LILI).

Belongs to the UppP family.

It is found in the cell membrane. The enzyme catalyses di-trans,octa-cis-undecaprenyl diphosphate + H2O = di-trans,octa-cis-undecaprenyl phosphate + phosphate + H(+). Catalyzes the dephosphorylation of undecaprenyl diphosphate (UPP). Confers resistance to bacitracin. This Baumannia cicadellinicola subsp. Homalodisca coagulata protein is Undecaprenyl-diphosphatase.